The primary structure comprises 1770 residues: Probable outer membrane protein PmpC (1770 aa).

An N-terminal signal peptide occupies residues methionine 1 to alanine 20. Disordered regions lie at residues leucine 73–asparagine 109, glutamate 264–glycine 311, proline 481–aspartate 505, glutamate 611–glutamate 818, and leucine 1271–threonine 1329. The span at serine 85 to glycine 97 shows a compositional bias: low complexity. Residues aspartate 268–serine 285 are compositionally biased toward polar residues. Composition is skewed to low complexity over residues serine 294–proline 303 and glutamine 496–aspartate 505. Composition is skewed to polar residues over residues threonine 631 to alanine 675 and glutamine 682 to glutamate 703. Low complexity-rich tracts occupy residues glutamate 719–serine 748 and serine 762–alanine 802. The segment covering asparagine 1303–proline 1319 has biased composition (polar residues). Positions glutamate 1477–phenylalanine 1770 constitute an Autotransporter domain.

This sequence belongs to the PMP outer membrane protein family.

Its subcellular location is the secreted. The protein localises to the cell wall. It localises to the cell outer membrane. This Chlamydia trachomatis serovar D (strain ATCC VR-885 / DSM 19411 / UW-3/Cx) protein is Probable outer membrane protein PmpC (pmpC).